We begin with the raw amino-acid sequence, 367 residues long: Pentatricopeptide repeat-containing protein At1g11900 (367 aa).

PPR repeat units follow at residues 69–103 (SKID…NICL), 104–139 (PISV…GKEP), 141–175 (SSDC…SLPY), 176–210 (RLIV…ECKP), 211–241 (DVIT…MKED), 247–281 (NIIT…GIEP), 282–316 (DLLS…QIRP), and 317–347 (SVYV…LKNT).

It belongs to the PPR family. P subfamily.

In Arabidopsis thaliana (Mouse-ear cress), this protein is Pentatricopeptide repeat-containing protein At1g11900.